A 683-amino-acid chain; its full sequence is Hexamerin 70b (683 aa).

Residues 1 to 21 (MIVIMKAGFLFLASLCLLVQA) form the signal peptide. The 122-residue stretch at 32–153 (VTRQKNIYEL…VAVIHRPDTK (122 aa)) folds into the Hemocyanin N-terminal domain. A Hemocyanin middle domain is found at 159–428 (PMYEVMPHLY…SIYKTILDYY (270 aa)). A glycan (N-linked (GlcNAc...) asparagine) is linked at Asn203. One can recognise a Hemocyanin C-terminal domain in the interval 437–673 (KYTTEELNFP…IHVKEVLVHH (237 aa)).

Belongs to the hemocyanin/hexamerin family. As to quaternary structure, probable homohexamer. Expressed in the fat body and secreted into the hemolymph (at protein level). Present in trophocytes and oenocytes of the fat body (at protein level).

The protein localises to the secreted. It localises to the nucleus. The protein resides in the cytoplasm. It is found in the cytoplasmic granule. Storage protein that may function as a nutrient supply to compensate for lack of dietary proteins during metamorphosis and egg production. This is Hexamerin 70b from Apis mellifera (Honeybee).